Here is a 229-residue protein sequence, read N- to C-terminus: Acidic leucine-rich nuclear phosphoprotein 32-related protein 1 (229 aa).

LRR repeat units follow at residues 19-40, 42-63, 64-85, and 90-110; these read TVDT…TDQL, NLEM…PTLP, ALTY…DVLV, and DLKK…RCLK. Residues 124-164 form the LRRCT domain; sequence PSLGLLEDYREKMFEMIPSLKILDGCDVDGEEVEEEFAGEG. The segment covering 155-177 has biased composition (acidic residues); sequence EVEEEFAGEGGEDSEEGSGDEDG. Positions 155–229 are disordered; that stretch reads EVEEEFAGEG…DNKKAAGDDE (75 aa). Residues 219-229 show a composition bias toward basic and acidic residues; it reads PDNKKAAGDDE.

The protein belongs to the ANP32 family.

In Caenorhabditis elegans, this protein is Acidic leucine-rich nuclear phosphoprotein 32-related protein 1.